A 131-amino-acid polypeptide reads, in one-letter code: Small ribosomal subunit protein uS8 (131 aa).

This sequence belongs to the universal ribosomal protein uS8 family. As to quaternary structure, part of the 30S ribosomal subunit. Contacts proteins S5 and S12.

Functionally, one of the primary rRNA binding proteins, it binds directly to 16S rRNA central domain where it helps coordinate assembly of the platform of the 30S subunit. In Acidovorax sp. (strain JS42), this protein is Small ribosomal subunit protein uS8.